We begin with the raw amino-acid sequence, 315 residues long: ATP synthase gamma chain (315 aa).

The protein belongs to the ATPase gamma chain family. As to quaternary structure, F-type ATPases have 2 components, CF(1) - the catalytic core - and CF(0) - the membrane proton channel. CF(1) has five subunits: alpha(3), beta(3), gamma(1), delta(1), epsilon(1). CF(0) has three main subunits: a, b and c.

The protein resides in the cellular thylakoid membrane. Functionally, produces ATP from ADP in the presence of a proton gradient across the membrane. The gamma chain is believed to be important in regulating ATPase activity and the flow of protons through the CF(0) complex. This is ATP synthase gamma chain from Nostoc sp. (strain PCC 7120 / SAG 25.82 / UTEX 2576).